We begin with the raw amino-acid sequence, 33 residues long: Ice-structuring protein GS-5 (33 aa).

Met1 carries the post-translational modification Blocked amino end (Met).

Belongs to the type-I AFP family.

Functionally, antifreeze proteins lower the blood freezing point. The chain is Ice-structuring protein GS-5 from Myoxocephalus aenaeus (Grubby sculpin).